Here is a 258-residue protein sequence, read N- to C-terminus: UPF0246 protein HS_0482 (258 aa).

The protein belongs to the UPF0246 family.

The protein is UPF0246 protein HS_0482 of Histophilus somni (strain 129Pt) (Haemophilus somnus).